A 258-amino-acid polypeptide reads, in one-letter code: Acyl-[acyl-carrier-protein]--UDP-N-acetylglucosamine O-acyltransferase (258 aa).

It belongs to the transferase hexapeptide repeat family. LpxA subfamily. As to quaternary structure, homotrimer.

Its subcellular location is the cytoplasm. The catalysed reaction is a (3R)-hydroxyacyl-[ACP] + UDP-N-acetyl-alpha-D-glucosamine = a UDP-3-O-[(3R)-3-hydroxyacyl]-N-acetyl-alpha-D-glucosamine + holo-[ACP]. The protein operates within glycolipid biosynthesis; lipid IV(A) biosynthesis; lipid IV(A) from (3R)-3-hydroxytetradecanoyl-[acyl-carrier-protein] and UDP-N-acetyl-alpha-D-glucosamine: step 1/6. In terms of biological role, involved in the biosynthesis of lipid A, a phosphorylated glycolipid that anchors the lipopolysaccharide to the outer membrane of the cell. In Saccharophagus degradans (strain 2-40 / ATCC 43961 / DSM 17024), this protein is Acyl-[acyl-carrier-protein]--UDP-N-acetylglucosamine O-acyltransferase.